The chain runs to 92 residues: Small ribosomal subunit protein bS20 (92 aa).

This sequence belongs to the bacterial ribosomal protein bS20 family.

Binds directly to 16S ribosomal RNA. The sequence is that of Small ribosomal subunit protein bS20 from Thermosipho africanus (strain TCF52B).